Consider the following 459-residue polypeptide: Cysteine--tRNA ligase (459 aa).

Cys-28 is a Zn(2+) binding site. Positions 30–40 (VTVYDLCHIGH) match the 'HIGH' region motif. Cys-209, His-234, and Glu-238 together coordinate Zn(2+). A 'KMSKS' region motif is present at residues 266–270 (KMSKS). Residue Lys-269 coordinates ATP.

This sequence belongs to the class-I aminoacyl-tRNA synthetase family. Monomer. Requires Zn(2+) as cofactor.

It localises to the cytoplasm. The enzyme catalyses tRNA(Cys) + L-cysteine + ATP = L-cysteinyl-tRNA(Cys) + AMP + diphosphate. The sequence is that of Cysteine--tRNA ligase from Histophilus somni (strain 129Pt) (Haemophilus somnus).